A 438-amino-acid polypeptide reads, in one-letter code: MRVLLVGGGGREHAIGEALVRGGAELYVVSKHKNPGLARLARGYGLAKETDIKKVLEYAEKFGVELAFIGPEAPLEKGIVDALEENGIPAVGPSREAAKLETDKAFARTFMERNEIPGRKVFRVFTDVSKMRSWVDDFGRPVVVKPIGLTGGKGVKVVGYQLRDNEEAKSYAEELIRRDGRVLIEERTNGVEFTFQVFTDGKRVLPMPLAQDYPHAYENDEGPITGGMGSYSCSNGLLPFVTREDYEKALETLKATVEAMRKEGTPYKGILYGQFMLSKGGPVLIEYNARFGDPEAINVLPLLETSLLEVAEGIVDGNLQGAEFEKKATVVKYLAPKGYPTNPVRGVKVEVNEKAVEEVGARLYYASIDENFTLLGSRAIAVVGIADSLEEAERIAKSVIPHVKGELFYRRDVGTRKSVEKRIELMKEFGKEFEPNPC.

The 209-residue stretch at 108 to 316 folds into the ATP-grasp domain; the sequence is RTFMERNEIP…LLEVAEGIVD (209 aa). ATP is bound at residue 135–194; it reads VDDFGRPVVVKPIGLTGGKGVKVVGYQLRDNEEAKSYAEELIRRDGRVLIEERTNGVEFT. Mg(2+) contacts are provided by Q274, E286, and N288. 3 residues coordinate Mn(2+): Q274, E286, and N288.

The protein belongs to the GARS family. Mg(2+) is required as a cofactor. Requires Mn(2+) as cofactor.

The catalysed reaction is 5-phospho-beta-D-ribosylamine + glycine + ATP = N(1)-(5-phospho-beta-D-ribosyl)glycinamide + ADP + phosphate + H(+). The protein operates within purine metabolism; IMP biosynthesis via de novo pathway; N(1)-(5-phospho-D-ribosyl)glycinamide from 5-phospho-alpha-D-ribose 1-diphosphate: step 2/2. The protein is Phosphoribosylamine--glycine ligase of Thermococcus gammatolerans (strain DSM 15229 / JCM 11827 / EJ3).